A 264-amino-acid polypeptide reads, in one-letter code: Propanediol uptake facilitator PduF (264 aa).

The next 2 helical transmembrane spans lie at 10-30 (GAEF…LSAL) and 42-62 (ICII…GISG). An NPA 1 motif is present at residues 66–68 (NPA). 3 consecutive transmembrane segments (helical) span residues 84–104 (VLPY…LAYV), 143–163 (VWQA…MIMA), and 179–199 (LLIG…TGFA). Positions 201 to 203 (NPA) match the NPA 2 motif. A helical membrane pass occupies residues 228–248 (IPYFIVPIVAPVIGACAGAAI).

This sequence belongs to the MIP/aquaporin (TC 1.A.8) family.

The protein localises to the cell inner membrane. Its function is as follows. Probably facilitates diffusion of 1,2-propanediol (1,2-PD) into the cell. Modeling suggests active transport of 1,2-PD is required at low extracellular concentrations to allow maximal growth and saturation of PduP/PduQ within the bacterial microcompartment (BMC); this protein may be the cellular transporter. The 1,2-PD-specific bacterial microcompartment (BMC) concentrates low levels of 1,2-PD catabolic enzymes, concentrates volatile reaction intermediates thus enhancing pathway flux and keeps the level of toxic, mutagenic propionaldehyde low. In Salmonella typhimurium (strain LT2 / SGSC1412 / ATCC 700720), this protein is Propanediol uptake facilitator PduF.